The chain runs to 153 residues: Ribosome maturation factor RimP (153 aa).

It belongs to the RimP family.

The protein resides in the cytoplasm. Required for maturation of 30S ribosomal subunits. This is Ribosome maturation factor RimP from Christiangramia forsetii (strain DSM 17595 / CGMCC 1.15422 / KT0803) (Gramella forsetii).